The chain runs to 487 residues: NADH-quinone oxidoreductase subunit N (487 aa).

14 helical membrane-spanning segments follow: residues 8–28, 35–55, 78–98, 104–124, 125–145, 159–179, 203–223, 235–255, 271–291, 297–317, 328–348, 376–396, 409–428, and 451–471; these read LIAM…MLSI, FINA…LYFV, GLVI…LVGY, EFYL…SANH, LASL…LIGY, YMLL…LLYA, ILAG…LVPF, PAPV…AVVM, LVLS…AISQ, LLGY…VAVQ, IGVY…VVSL, AVMT…GFIG, LWWL…YYYL, and ALTA…VLGI.

The protein belongs to the complex I subunit 2 family. NDH-1 is composed of 13 different subunits. Subunits NuoA, H, J, K, L, M, N constitute the membrane sector of the complex.

Its subcellular location is the cell inner membrane. It carries out the reaction a quinone + NADH + 5 H(+)(in) = a quinol + NAD(+) + 4 H(+)(out). In terms of biological role, NDH-1 shuttles electrons from NADH, via FMN and iron-sulfur (Fe-S) centers, to quinones in the respiratory chain. The immediate electron acceptor for the enzyme in this species is believed to be ubiquinone. Couples the redox reaction to proton translocation (for every two electrons transferred, four hydrogen ions are translocated across the cytoplasmic membrane), and thus conserves the redox energy in a proton gradient. The sequence is that of NADH-quinone oxidoreductase subunit N from Yersinia pestis bv. Antiqua (strain Angola).